The primary structure comprises 198 residues: Lipoprotein signal peptidase (198 aa).

Residues methionine 1–proline 34 form a disordered region. Over residues alanine 12–proline 26 the composition is skewed to acidic residues. Helical transmembrane passes span leucine 42 to valine 62, methionine 92 to valine 112, and serine 120 to aspartate 140. Active-site residues include aspartate 155 and aspartate 169. A helical transmembrane segment spans residues valine 167–leucine 187.

It belongs to the peptidase A8 family.

It is found in the cell membrane. It carries out the reaction Release of signal peptides from bacterial membrane prolipoproteins. Hydrolyzes -Xaa-Yaa-Zaa-|-(S,diacylglyceryl)Cys-, in which Xaa is hydrophobic (preferably Leu), and Yaa (Ala or Ser) and Zaa (Gly or Ala) have small, neutral side chains.. It participates in protein modification; lipoprotein biosynthesis (signal peptide cleavage). This protein specifically catalyzes the removal of signal peptides from prolipoproteins. The protein is Lipoprotein signal peptidase of Rhodococcus jostii (strain RHA1).